The following is a 327-amino-acid chain: Phenylalanine--tRNA ligase alpha subunit (327 aa).

Residue Glu252 participates in Mg(2+) binding.

Belongs to the class-II aminoacyl-tRNA synthetase family. Phe-tRNA synthetase alpha subunit type 1 subfamily. As to quaternary structure, tetramer of two alpha and two beta subunits. It depends on Mg(2+) as a cofactor.

The protein localises to the cytoplasm. It catalyses the reaction tRNA(Phe) + L-phenylalanine + ATP = L-phenylalanyl-tRNA(Phe) + AMP + diphosphate + H(+). This chain is Phenylalanine--tRNA ligase alpha subunit, found in Yersinia pseudotuberculosis serotype O:1b (strain IP 31758).